The primary structure comprises 246 residues: Exosome complex component Rrp41 (246 aa).

It belongs to the RNase PH family. Rrp41 subfamily. As to quaternary structure, component of the archaeal exosome complex. Forms a hexameric ring-like arrangement composed of 3 Rrp41-Rrp42 heterodimers. The hexameric ring associates with a trimer of Rrp4 and/or Csl4 subunits.

Its subcellular location is the cytoplasm. In terms of biological role, catalytic component of the exosome, which is a complex involved in RNA degradation. Has 3'-&gt;5' exoribonuclease activity. Can also synthesize heteromeric RNA-tails. In Pyrobaculum islandicum (strain DSM 4184 / JCM 9189 / GEO3), this protein is Exosome complex component Rrp41.